A 129-amino-acid chain; its full sequence is MAKTPVRARKRVKKQIVDGVAHIHASFNNTIVTITDRQGNALAWATAGGSGFRGSRKSTPFAAQVAAERCAEMVKEFGLKNLEVMVKGPGPGRESTIRALNAAGFRITNITDVTPIPHNGCRPPKKRRV.

It belongs to the universal ribosomal protein uS11 family. In terms of assembly, part of the 30S ribosomal subunit. Interacts with proteins S7 and S18. Binds to IF-3.

Located on the platform of the 30S subunit, it bridges several disparate RNA helices of the 16S rRNA. Forms part of the Shine-Dalgarno cleft in the 70S ribosome. The sequence is that of Small ribosomal subunit protein uS11 from Glaesserella parasuis serovar 5 (strain SH0165) (Haemophilus parasuis).